The primary structure comprises 159 residues: Ribonuclease H (159 aa).

Residues 1 to 142 (MHKQVEIFTD…CDELAKAAAQ (142 aa)) enclose the RNase H type-1 domain. Mg(2+)-binding residues include Asp-10, Glu-48, Asp-70, and Asp-134. The segment at 135–159 (ELAKAAAQSPTKEDTGYLESQQDKT) is disordered. Over residues 145-159 (TKEDTGYLESQQDKT) the composition is skewed to basic and acidic residues.

It belongs to the RNase H family. In terms of assembly, monomer. Mg(2+) is required as a cofactor.

It localises to the cytoplasm. It carries out the reaction Endonucleolytic cleavage to 5'-phosphomonoester.. Endonuclease that specifically degrades the RNA of RNA-DNA hybrids. This Proteus mirabilis (strain HI4320) protein is Ribonuclease H.